The following is a 77-amino-acid chain: Large ribosomal subunit protein bL28 (77 aa).

The interval 1 to 20 (MSRVCQVTGKGPVTGNNISH) is disordered.

This sequence belongs to the bacterial ribosomal protein bL28 family.

This chain is Large ribosomal subunit protein bL28, found in Pseudomonas fluorescens (strain Pf0-1).